The chain runs to 464 residues: Argininosuccinate lyase (464 aa).

It belongs to the lyase 1 family. Argininosuccinate lyase subfamily.

It localises to the cytoplasm. It catalyses the reaction 2-(N(omega)-L-arginino)succinate = fumarate + L-arginine. Its pathway is amino-acid biosynthesis; L-arginine biosynthesis; L-arginine from L-ornithine and carbamoyl phosphate: step 3/3. The polypeptide is Argininosuccinate lyase (Alcanivorax borkumensis (strain ATCC 700651 / DSM 11573 / NCIMB 13689 / SK2)).